Reading from the N-terminus, the 88-residue chain is Small ribosomal subunit protein uS15 (88 aa).

The protein belongs to the universal ribosomal protein uS15 family. As to quaternary structure, part of the 30S ribosomal subunit. Forms a bridge to the 50S subunit in the 70S ribosome, contacting the 23S rRNA.

Functionally, one of the primary rRNA binding proteins, it binds directly to 16S rRNA where it helps nucleate assembly of the platform of the 30S subunit by binding and bridging several RNA helices of the 16S rRNA. Its function is as follows. Forms an intersubunit bridge (bridge B4) with the 23S rRNA of the 50S subunit in the ribosome. The sequence is that of Small ribosomal subunit protein uS15 from Verminephrobacter eiseniae (strain EF01-2).